The chain runs to 140 residues: Endoribonuclease YbeY (140 aa).

3 residues coordinate Zn(2+): histidine 105, histidine 109, and aspartate 115.

This sequence belongs to the endoribonuclease YbeY family. Zn(2+) serves as cofactor.

Its subcellular location is the cytoplasm. In terms of biological role, single strand-specific metallo-endoribonuclease involved in late-stage 70S ribosome quality control and in maturation of the 3' terminus of the 16S rRNA. This is Endoribonuclease YbeY from Flavobacterium psychrophilum (strain ATCC 49511 / DSM 21280 / CIP 103535 / JIP02/86).